A 443-amino-acid chain; its full sequence is Methylenetetrahydrofolate--tRNA-(uracil-5-)-methyltransferase TrmFO (443 aa).

8 to 13 (GAGLAG) serves as a coordination point for FAD.

Belongs to the MnmG family. TrmFO subfamily. The cofactor is FAD.

It localises to the cytoplasm. It catalyses the reaction uridine(54) in tRNA + (6R)-5,10-methylene-5,6,7,8-tetrahydrofolate + NADH + H(+) = 5-methyluridine(54) in tRNA + (6S)-5,6,7,8-tetrahydrofolate + NAD(+). The catalysed reaction is uridine(54) in tRNA + (6R)-5,10-methylene-5,6,7,8-tetrahydrofolate + NADPH + H(+) = 5-methyluridine(54) in tRNA + (6S)-5,6,7,8-tetrahydrofolate + NADP(+). Functionally, catalyzes the folate-dependent formation of 5-methyl-uridine at position 54 (M-5-U54) in all tRNAs. The polypeptide is Methylenetetrahydrofolate--tRNA-(uracil-5-)-methyltransferase TrmFO (Thermus thermophilus (strain ATCC 27634 / DSM 579 / HB8)).